The chain runs to 805 residues: Kinesin-like protein Klp10A (805 aa).

The interval 1–274 (MDMITVGQSV…FVPLLDGQAV (274 aa)) is globular. 2 disordered regions span residues 68 to 94 (QHAA…SAIG) and 117 to 211 (IPNP…RRSH). The segment covering 80-94 (APMNLSRNPTQSAIG) has biased composition (polar residues). Residues 123 to 136 (SSNSVNTNSNSNTT) are compositionally biased toward low complexity. Ser-157 carries the post-translational modification Phosphoserine. Over residues 158 to 179 (QAATGQQQTRIASAVPNNTLPN) the composition is skewed to polar residues. The segment covering 180–200 (PSAAASAGPAAQGVATAATTQ) has biased composition (low complexity). The stretch at 205–244 (ASTRRSHALKEVERLKENREKRRARQAEMKEEKVALMNQD) forms a coiled coil. Residues 278 to 610 (QITVCVRKRP…LRYADRVKEL (333 aa)) form the Kinesin motor domain. 368 to 375 (GQTGSGKT) is a binding site for ATP. At Thr-630 the chain carries Phosphothreonine. The segment at 633–688 (EEEEELNMVHPHSHQLHPNSHAPASQSNNQRAPASHHSGAVIHNNNNNNNKNGNAG) is disordered. Residues 648-664 (LHPNSHAPASQSNNQRA) show a composition bias toward polar residues. A compositionally biased stretch (low complexity) spans 676-688 (NNNNNNNKNGNAG). Ser-795, Ser-797, and Ser-800 each carry phosphoserine.

The protein belongs to the TRAFAC class myosin-kinesin ATPase superfamily. Kinesin family. MCAK/KIF2 subfamily. As to quaternary structure, interacts with Alms1a (via C-terminus). In terms of tissue distribution, expressed in male germline stem cells and spermatogonia (at protein level).

The protein localises to the cytoplasm. The protein resides in the cytoskeleton. It is found in the microtubule organizing center. Its subcellular location is the centrosome. It localises to the spindle pole. The protein localises to the chromosome. The protein resides in the centromere. In terms of biological role, required during anaphase to drive sister chromatid separation to promote flux by actively depolymerizing kinetochore microtubules at their pole-associated minus ends, thereby moving chromatids through a 'poleward flux'. Involved in asymmetric cell division of sensory organ precursor (SOP) cells by playing a role in the asymmetric localization of Sara-expressing endosomes to the pIIa daughter cell but not to the pIIb cell. Klp98A targets Sara-expressing endosomes to the central spindle which is symmetrically arranged in early cell division. During late cytokinesis, central spindle asymmetry is generated by enrichment of Patronin on the pIIb side which protects microtubules from depolymerization by Klp10A while unprotected microtubules on the pIIa side are disassembled by Klp10A, leading to the asymmetric delivery of Sara-expressing endosomes to the pIIa daughter cell. The chain is Kinesin-like protein Klp10A from Drosophila melanogaster (Fruit fly).